Here is a 130-residue protein sequence, read N- to C-terminus: Lysozyme C (130 aa).

The C-type lysozyme domain maps to 1-130; that stretch reads KTYERCELAR…VSPWIRDCGL (130 aa). 4 disulfide bridges follow: cysteine 6–cysteine 128, cysteine 30–cysteine 116, cysteine 65–cysteine 81, and cysteine 77–cysteine 95. Catalysis depends on residues glutamate 35 and aspartate 53.

It belongs to the glycosyl hydrolase 22 family. Monomer.

The protein localises to the secreted. The enzyme catalyses Hydrolysis of (1-&gt;4)-beta-linkages between N-acetylmuramic acid and N-acetyl-D-glucosamine residues in a peptidoglycan and between N-acetyl-D-glucosamine residues in chitodextrins.. Lysozymes have primarily a bacteriolytic function; those in tissues and body fluids are associated with the monocyte-macrophage system and enhance the activity of immunoagents. The chain is Lysozyme C (LYZ) from Chelonia mydas (Green sea-turtle).